We begin with the raw amino-acid sequence, 78 residues long: MGGISIWQLLIIAVIVVLLFGTKKLRGIGSDLGGAIKGFKKAMNEEESEKKDADFEPKSLEQQNKQAATESKKDKEQA.

Residues 1–21 (MGGISIWQLLIIAVIVVLLFG) traverse the membrane as a helical segment. A compositionally biased stretch (basic and acidic residues) spans 47-59 (ESEKKDADFEPKS). The interval 47–78 (ESEKKDADFEPKSLEQQNKQAATESKKDKEQA) is disordered. Over residues 60–69 (LEQQNKQAAT) the composition is skewed to polar residues.

The protein belongs to the TatA/E family. The Tat system comprises two distinct complexes: a TatABC complex, containing multiple copies of TatA, TatB and TatC subunits, and a separate TatA complex, containing only TatA subunits. Substrates initially bind to the TatABC complex, which probably triggers association of the separate TatA complex to form the active translocon.

It localises to the cell inner membrane. Part of the twin-arginine translocation (Tat) system that transports large folded proteins containing a characteristic twin-arginine motif in their signal peptide across membranes. TatA could form the protein-conducting channel of the Tat system. The chain is Sec-independent protein translocase protein TatA from Vibrio vulnificus (strain YJ016).